Here is a 1040-residue protein sequence, read N- to C-terminus: Multidrug resistance protein MdtB (1040 aa).

11 consecutive transmembrane segments (helical) span residues L15–G37, F345–L362, A367–L389, L396–N418, G438–F460, F472–M494, H535–I557, V867–I889, L909–V931, I968–T990, and M1000–F1022.

This sequence belongs to the resistance-nodulation-cell division (RND) (TC 2.A.6) family. MdtB subfamily. Part of a tripartite efflux system composed of MdtA, MdtB and MdtC. MdtB forms a heteromultimer with MdtC.

The protein resides in the cell inner membrane. In Salmonella typhimurium (strain LT2 / SGSC1412 / ATCC 700720), this protein is Multidrug resistance protein MdtB.